Consider the following 399-residue polypeptide: Probable tRNA sulfurtransferase (399 aa).

The region spanning 60–165 (YAVMERLKRV…TEGTYISCET (106 aa)) is the THUMP domain. ATP contacts are provided by residues 183-184 (LL), 208-209 (HF), Arg265, Gly287, and Gln296.

Belongs to the ThiI family.

It is found in the cytoplasm. The catalysed reaction is [ThiI sulfur-carrier protein]-S-sulfanyl-L-cysteine + a uridine in tRNA + 2 reduced [2Fe-2S]-[ferredoxin] + ATP + H(+) = [ThiI sulfur-carrier protein]-L-cysteine + a 4-thiouridine in tRNA + 2 oxidized [2Fe-2S]-[ferredoxin] + AMP + diphosphate. It carries out the reaction [ThiS sulfur-carrier protein]-C-terminal Gly-Gly-AMP + S-sulfanyl-L-cysteinyl-[cysteine desulfurase] + AH2 = [ThiS sulfur-carrier protein]-C-terminal-Gly-aminoethanethioate + L-cysteinyl-[cysteine desulfurase] + A + AMP + 2 H(+). It functions in the pathway cofactor biosynthesis; thiamine diphosphate biosynthesis. In terms of biological role, catalyzes the ATP-dependent transfer of a sulfur to tRNA to produce 4-thiouridine in position 8 of tRNAs, which functions as a near-UV photosensor. Also catalyzes the transfer of sulfur to the sulfur carrier protein ThiS, forming ThiS-thiocarboxylate. This is a step in the synthesis of thiazole, in the thiamine biosynthesis pathway. The sulfur is donated as persulfide by IscS. This Brevibacillus brevis (strain 47 / JCM 6285 / NBRC 100599) protein is Probable tRNA sulfurtransferase.